A 186-amino-acid chain; its full sequence is Peptidyl-tRNA hydrolase (186 aa).

H19 acts as the Proton acceptor in catalysis. 3 residues coordinate tRNA: F64, N66, and N112.

It belongs to the PTH family. Monomer.

It is found in the cytoplasm. The enzyme catalyses an N-acyl-L-alpha-aminoacyl-tRNA + H2O = an N-acyl-L-amino acid + a tRNA + H(+). Hydrolyzes ribosome-free peptidyl-tRNAs (with 1 or more amino acids incorporated), which drop off the ribosome during protein synthesis, or as a result of ribosome stalling. Its function is as follows. Catalyzes the release of premature peptidyl moieties from peptidyl-tRNA molecules trapped in stalled 50S ribosomal subunits, and thus maintains levels of free tRNAs and 50S ribosomes. This is Peptidyl-tRNA hydrolase from Pelagibacter ubique (strain HTCC1062).